Reading from the N-terminus, the 95-residue chain is Pyrimidine/purine nucleoside phosphorylase (95 aa).

This sequence belongs to the nucleoside phosphorylase PpnP family.

The enzyme catalyses a purine D-ribonucleoside + phosphate = a purine nucleobase + alpha-D-ribose 1-phosphate. It catalyses the reaction adenosine + phosphate = alpha-D-ribose 1-phosphate + adenine. The catalysed reaction is cytidine + phosphate = cytosine + alpha-D-ribose 1-phosphate. It carries out the reaction guanosine + phosphate = alpha-D-ribose 1-phosphate + guanine. The enzyme catalyses inosine + phosphate = alpha-D-ribose 1-phosphate + hypoxanthine. It catalyses the reaction thymidine + phosphate = 2-deoxy-alpha-D-ribose 1-phosphate + thymine. The catalysed reaction is uridine + phosphate = alpha-D-ribose 1-phosphate + uracil. It carries out the reaction xanthosine + phosphate = alpha-D-ribose 1-phosphate + xanthine. In terms of biological role, catalyzes the phosphorolysis of diverse nucleosides, yielding D-ribose 1-phosphate and the respective free bases. Can use uridine, adenosine, guanosine, cytidine, thymidine, inosine and xanthosine as substrates. Also catalyzes the reverse reactions. This chain is Pyrimidine/purine nucleoside phosphorylase, found in Yersinia enterocolitica serotype O:8 / biotype 1B (strain NCTC 13174 / 8081).